The primary structure comprises 166 residues: Small ribosomal subunit protein uS5 (166 aa).

Residues 11-74 form the S5 DRBM domain; sequence LQEKLIAVNR…EKARRNMITV (64 aa).

It belongs to the universal ribosomal protein uS5 family. As to quaternary structure, part of the 30S ribosomal subunit. Contacts proteins S4 and S8.

Functionally, with S4 and S12 plays an important role in translational accuracy. Its function is as follows. Located at the back of the 30S subunit body where it stabilizes the conformation of the head with respect to the body. The chain is Small ribosomal subunit protein uS5 from Histophilus somni (strain 2336) (Haemophilus somnus).